The following is a 455-amino-acid chain: Glutamyl-tRNA reductase (455 aa).

Residues 49 to 52 (TCNR), serine 109, 114 to 116 (ETQ), and glutamine 120 contribute to the substrate site. The active-site Nucleophile is cysteine 50. 189 to 194 (GAGKMG) contacts NADP(+).

Belongs to the glutamyl-tRNA reductase family. Homodimer.

It catalyses the reaction (S)-4-amino-5-oxopentanoate + tRNA(Glu) + NADP(+) = L-glutamyl-tRNA(Glu) + NADPH + H(+). It functions in the pathway porphyrin-containing compound metabolism; protoporphyrin-IX biosynthesis; 5-aminolevulinate from L-glutamyl-tRNA(Glu): step 1/2. Its function is as follows. Catalyzes the NADPH-dependent reduction of glutamyl-tRNA(Glu) to glutamate 1-semialdehyde (GSA). This chain is Glutamyl-tRNA reductase, found in Geobacillus thermodenitrificans (strain NG80-2).